Here is a 106-residue protein sequence, read N- to C-terminus: UPF0145 protein Cthe_0398 (106 aa).

The protein belongs to the UPF0145 family.

This Acetivibrio thermocellus (strain ATCC 27405 / DSM 1237 / JCM 9322 / NBRC 103400 / NCIMB 10682 / NRRL B-4536 / VPI 7372) (Clostridium thermocellum) protein is UPF0145 protein Cthe_0398.